Consider the following 245-residue polypeptide: Probable septum site-determining protein MinC (245 aa).

The span at 112–132 shows a compositional bias: basic and acidic residues; the sequence is ARERPLESAEPVAPKKPEKPP. The interval 112–140 is disordered; sequence ARERPLESAEPVAPKKPEKPPEPTVKPTR.

It belongs to the MinC family. In terms of assembly, interacts with MinD and FtsZ.

Its function is as follows. Cell division inhibitor that blocks the formation of polar Z ring septums. Rapidly oscillates between the poles of the cell to destabilize FtsZ filaments that have formed before they mature into polar Z rings. Prevents FtsZ polymerization. The chain is Probable septum site-determining protein MinC from Pseudomonas fluorescens (strain Pf0-1).